The chain runs to 296 residues: MYLSLLKSLNRLSPRAWDFVQLTRIDKPIGIYLLLWPTLWAVWIAGKGSPSLNTVFIFVAGVFLMRAAGCVINDFADRKVDGHVKRTEQRPLVSGKVSSREALVLFAVLVSLSFVLVLFTNSTTIWLSFGGLALAACYPFMKRYTYYPQVVLGAAFSWGMPMAFTAETGELPAAAWLLYIANLLWTVGYDTYYAMVDRDDDLKIGVKSTAVLFGDADRVIILSLQGLALGCLALAGSRFELGAFFYMGLLVAAACFAWEFWSTRLRERDACFKAFLHNHWAGLAIFLGIVADYALR.

9 consecutive transmembrane segments (helical) span residues 28–48, 52–72, 102–122, 123–140, 146–166, 169–189, 219–239, 241–261, and 275–295; these read PIGIYLLLWPTLWAVWIAGKG, LNTVFIFVAGVFLMRAAGCVI, ALVLFAVLVSLSFVLVLFTNS, TTIWLSFGGLALAACYPF, YYPQVVLGAAFSWGMPMAFTA, GELPAAAWLLYIANLLWTVGY, VIILSLQGLALGCLALAGSRF, LGAFFYMGLLVAAACFAWEFW, and FLHNHWAGLAIFLGIVADYAL.

Belongs to the UbiA prenyltransferase family. The cofactor is Mg(2+).

The protein localises to the cell inner membrane. The catalysed reaction is all-trans-octaprenyl diphosphate + 4-hydroxybenzoate = 4-hydroxy-3-(all-trans-octaprenyl)benzoate + diphosphate. The protein operates within cofactor biosynthesis; ubiquinone biosynthesis. Its function is as follows. Catalyzes the prenylation of para-hydroxybenzoate (PHB) with an all-trans polyprenyl group. Mediates the second step in the final reaction sequence of ubiquinone-8 (UQ-8) biosynthesis, which is the condensation of the polyisoprenoid side chain with PHB, generating the first membrane-bound Q intermediate 3-octaprenyl-4-hydroxybenzoate. This Pseudomonas syringae pv. tomato (strain ATCC BAA-871 / DC3000) protein is 4-hydroxybenzoate octaprenyltransferase.